An 86-amino-acid polypeptide reads, in one-letter code: Exodeoxyribonuclease 7 small subunit (86 aa).

The tract at residues 1-26 is disordered; it reads MQDELFETEKAPQKNTKNAKNAPKKS.

It belongs to the XseB family. In terms of assembly, heterooligomer composed of large and small subunits.

It localises to the cytoplasm. It carries out the reaction Exonucleolytic cleavage in either 5'- to 3'- or 3'- to 5'-direction to yield nucleoside 5'-phosphates.. Its function is as follows. Bidirectionally degrades single-stranded DNA into large acid-insoluble oligonucleotides, which are then degraded further into small acid-soluble oligonucleotides. In Helicobacter pylori (strain Shi470), this protein is Exodeoxyribonuclease 7 small subunit.